An 84-amino-acid polypeptide reads, in one-letter code: Small ribosomal subunit protein bS16 (84 aa).

This sequence belongs to the bacterial ribosomal protein bS16 family.

The protein is Small ribosomal subunit protein bS16 of Deinococcus radiodurans (strain ATCC 13939 / DSM 20539 / JCM 16871 / CCUG 27074 / LMG 4051 / NBRC 15346 / NCIMB 9279 / VKM B-1422 / R1).